The chain runs to 301 residues: MQASADQVERDILETQKRLQQDRLNSEQSQALQHQQETGSSLKEAEVLLKDLFLDVDKARRLKHPQAEETEKDIEQLHERVTQECAEYCALYEKMVLPPRRGIQGRLGTRAGAETEAGLRRPVWAGHGGAGGTDRGAQHRAEGDQRPRRAAAEPGGAGCRHHPEPIPRPTEGGVVARAEPGQPVHALQGCTWQLSALAEQQRRILQQDWSDLMADPAGVRREYEHFKQHELLSQEQSVNQLEEDGKRMVELRHPAVGPIQAHQEALKMEWQNFLNLCICQETQLQHVEDYSRILCPSSSPH.

A coiled-coil region spans residues 1 to 88 (MQASADQVER…ERVTQECAEY (88 aa)). 2 disordered regions span residues 18–41 (RLQQ…TGSS) and 118–166 (GLRR…PEPI). A compositionally biased stretch (polar residues) spans 26–41 (SEQSQALQHQQETGSS). Residues 136 to 151 (GAQHRAEGDQRPRRAA) show a composition bias toward basic and acidic residues.

This sequence belongs to the plakin or cytolinker family.

The protein is Envoplakin-like protein (EVPLL) of Homo sapiens (Human).